Reading from the N-terminus, the 170-residue chain is Flavodoxin (170 aa).

Residues 4 to 165 (IGLFFGTQTG…RIQAWVAQLK (162 aa)) form the Flavodoxin-like domain.

Belongs to the flavodoxin family. FMN serves as cofactor.

Functionally, low-potential electron donor to a number of redox enzymes. The chain is Flavodoxin (isiB) from Picosynechococcus sp. (strain ATCC 27264 / PCC 7002 / PR-6) (Agmenellum quadruplicatum).